A 209-amino-acid chain; its full sequence is Uracil phosphoribosyltransferase (209 aa).

5-phospho-alpha-D-ribose 1-diphosphate contacts are provided by residues Arg78, Arg103, and 130-138; that span reads DPMLATAGS. Uracil is bound by residues Ile193 and 198–200; that span reads GDA. Asp199 is a binding site for 5-phospho-alpha-D-ribose 1-diphosphate.

Belongs to the UPRTase family. The cofactor is Mg(2+).

It carries out the reaction UMP + diphosphate = 5-phospho-alpha-D-ribose 1-diphosphate + uracil. Its pathway is pyrimidine metabolism; UMP biosynthesis via salvage pathway; UMP from uracil: step 1/1. Its activity is regulated as follows. Allosterically activated by GTP. Its function is as follows. Catalyzes the conversion of uracil and 5-phospho-alpha-D-ribose 1-diphosphate (PRPP) to UMP and diphosphate. This Methylibium petroleiphilum (strain ATCC BAA-1232 / LMG 22953 / PM1) protein is Uracil phosphoribosyltransferase.